A 474-amino-acid polypeptide reads, in one-letter code: Nucleobindin-1 (474 aa).

The first 24 residues, 1–24 (MPPSGPRAALFLLPSLLLLRAVLA), serve as a signal peptide directing secretion. S83 bears the Phosphoserine mark. Position 145 is a phosphothreonine (T145). Positions 147-215 (EARDLELLIQ…QQRRHREHPK (69 aa)) form a coiled coil. Positions 190–207 (SLGEEQRKEAERKLEEQQ) are enriched in basic and acidic residues. The segment at 190-218 (SLGEEQRKEAERKLEEQQRRHREHPKVNV) is disordered. The segment at 225 to 318 (LKEVWEELDG…VTLEEFLAST (94 aa)) is binds to GNAI2 and GNAI3. EF-hand domains lie at 237–272 (PNRF…ELEK) and 289–324 (ERLR…KEFG). Residues D250, N252, D254, E261, D302, N304, D306, and E313 each coordinate Ca(2+). The GBA motif lies at 300-330 (NVDTNQDRLVTLEEFLASTQRKEFGDTGEGW). Positions 355–422 (AYTEEELRRF…RKQQQQSHNN (68 aa)) form a coiled coil. The interval 382–474 (LSQETEALGR…EPPQLDSQHL (93 aa)) is disordered. Phosphoserine is present on S383. The span at 448–460 (DQKDVDASEKKVP) shows a compositional bias: basic and acidic residues. S471 is modified (phosphoserine).

It belongs to the nucleobindin family. As to quaternary structure, interacts (via GBA motif) with guanine nucleotide-binding protein G(i) alpha subunits GNAI1, GNAI2 and GNAI3 with higher affinity for GNAI1 and GNAI3 than for GNAI2. Preferentially interacts with inactive rather than active GNAI3. Interaction with GNAI3 is inhibited when NUCB1 binds calcium, probably due to a conformational change which renders the GBA motif inaccessible. In terms of tissue distribution, expressed in bone where it is detected in the soft tissue in the center of the osteon and in the osteocyte lacuna (at protein level).

It is found in the golgi apparatus. The protein resides in the cis-Golgi network membrane. Its subcellular location is the cytoplasm. It localises to the secreted. In terms of biological role, major calcium-binding protein of the Golgi which may have a role in calcium homeostasis. Acts as a non-receptor guanine nucleotide exchange factor which binds to and activates alpha subunits of guanine nucleotide-binding proteins (G proteins). The sequence is that of Nucleobindin-1 (NUCB1) from Bos taurus (Bovine).